We begin with the raw amino-acid sequence, 269 residues long: Phosphate import ATP-binding protein PstB (269 aa).

Positions 14–253 (LSLENVSISY…EFNSTKKIFN (240 aa)) constitute an ABC transporter domain. 46-53 (GPSGCGKS) is a binding site for ATP.

Belongs to the ABC transporter superfamily. Phosphate importer (TC 3.A.1.7) family. As to quaternary structure, the complex is composed of two ATP-binding proteins (PstB), two transmembrane proteins (PstC and PstA) and a solute-binding protein (PstS).

The protein resides in the cell inner membrane. The catalysed reaction is phosphate(out) + ATP + H2O = ADP + 2 phosphate(in) + H(+). Its function is as follows. Part of the ABC transporter complex PstSACB involved in phosphate import. Responsible for energy coupling to the transport system. In Prochlorococcus marinus (strain MIT 9312), this protein is Phosphate import ATP-binding protein PstB.